Here is a 250-residue protein sequence, read N- to C-terminus: Cruxrhodopsin-1 (250 aa).

Residues 1-9 lie on the Extracellular side of the membrane; the sequence is MPEPGSEAI. Residues 10-27 traverse the membrane as a helical segment; the sequence is WLWLGTAGMFLGMLYFIA. Topologically, residues 28 to 41 are cytoplasmic; sequence RGWGETDSRRQKFY. A helical membrane pass occupies residues 42-60; the sequence is IATILITAIAFVNYLAMAL. The Extracellular portion of the chain corresponds to 61 to 77; it reads GFGLTIVEFAGEEHPIY. Residues 78 to 94 traverse the membrane as a helical segment; the sequence is WARYSDWLFTTPLLLYD. Residues 95-105 are Cytoplasmic-facing; it reads LGLLAGADRNT. The chain crosses the membrane as a helical span at residues 106–125; it reads ITSLVSLDVLMIGTGLVATL. Residues 126-138 lie on the Extracellular side of the membrane; it reads SPGSGVLSAGAER. The chain crosses the membrane as a helical span at residues 139–158; it reads LVWWGISTAFLLVLLYFLFS. Over 159-176 the chain is Cytoplasmic; that stretch reads SLSGRVADLPSDTRSTFK. The helical transmembrane segment at 177–195 threads the bilayer; that stretch reads TLRNLVTVVWLVYPVWWLI. At 196 to 207 the chain is on the extracellular side; it reads GTEGIGLVGIGI. The chain crosses the membrane as a helical span at residues 208–227; that stretch reads ETAGFMVIDLTAKVGFGIIL. Lys220 carries the N6-(retinylidene)lysine modification. Topologically, residues 228-250 are cytoplasmic; sequence LRSHGVLDGAAETTGTGATPADD.

Belongs to the archaeal/bacterial/fungal opsin family. As to quaternary structure, homotrimer.

It localises to the cell membrane. Functionally, light-driven proton pump. The sequence is that of Cruxrhodopsin-1 (cop1) from Haloarcula argentinensis.